A 584-amino-acid polypeptide reads, in one-letter code: 2-succinyl-5-enolpyruvyl-6-hydroxy-3-cyclohexene-1-carboxylate synthase (584 aa).

The protein belongs to the TPP enzyme family. MenD subfamily. Homodimer. The cofactor is Mg(2+). Mn(2+) serves as cofactor. Thiamine diphosphate is required as a cofactor.

The enzyme catalyses isochorismate + 2-oxoglutarate + H(+) = 5-enolpyruvoyl-6-hydroxy-2-succinyl-cyclohex-3-ene-1-carboxylate + CO2. It participates in quinol/quinone metabolism; 1,4-dihydroxy-2-naphthoate biosynthesis; 1,4-dihydroxy-2-naphthoate from chorismate: step 2/7. It functions in the pathway quinol/quinone metabolism; menaquinone biosynthesis. Functionally, catalyzes the thiamine diphosphate-dependent decarboxylation of 2-oxoglutarate and the subsequent addition of the resulting succinic semialdehyde-thiamine pyrophosphate anion to isochorismate to yield 2-succinyl-5-enolpyruvyl-6-hydroxy-3-cyclohexene-1-carboxylate (SEPHCHC). The polypeptide is 2-succinyl-5-enolpyruvyl-6-hydroxy-3-cyclohexene-1-carboxylate synthase (Bacillus cereus (strain ZK / E33L)).